Consider the following 390-residue polypeptide: F-box/kelch-repeat protein At4g39753 (390 aa).

Residues 1 to 16 show a composition bias toward low complexity; that stretch reads MVTFWAETAASAATTS. The disordered stretch occupies residues 1–33; that stretch reads MVTFWAETAASAATTSKGEPPSKKRKTNPSPPP. The region spanning 32-79 is the F-box domain; sequence PPSLLSLPDVLILNCLSRIPKSYYPKLSIVSKTFRDLIISIDLNHARF. Kelch repeat units lie at residues 139-192, 193-243, 245-286, and 288-321; these read PLLV…VFDR, KIYV…MIQG, FYVR…WYSC, and PNSF…LIET.

This chain is F-box/kelch-repeat protein At4g39753, found in Arabidopsis thaliana (Mouse-ear cress).